We begin with the raw amino-acid sequence, 240 residues long: C-type lectin domain family 4 member A (240 aa).

Residues 1–48 lie on the Cytoplasmic side of the membrane; it reads MASEITYAEVRIKNESNSSVTYSGSPAAPREKPTRHLSKPGSLLVPFT. The ITIM motif signature appears at 5 to 10; that stretch reads ITYAEV. The tract at residues 18–38 is disordered; it reads SSVTYSGSPAAPREKPTRHLS. A helical; Signal-anchor for type II membrane protein transmembrane segment spans residues 49–69; the sequence is SLMVLLLLLAITFLVAFIIYF. The Extracellular segment spans residues 70 to 240; that stretch reads QKYSQFLEEK…SVCQMKKIQL (171 aa). 3 disulfides stabilise this stretch: Cys-107–Cys-118, Cys-140–Cys-233, and Cys-208–Cys-225. A C-type lectin domain is found at 129-235; that stretch reads SKASWSESEK…SGKQQSVCQM (107 aa). 2 residues coordinate Ca(2+): Val-149 and Glu-155. N-linked (GlcNAc...) asparagine glycosylation is present at Asn-190. Residues Glu-200, Ser-202, and Glu-206 each contribute to the Ca(2+) site. Alpha-D-mannopyranose-binding positions include 200–202 and Glu-206; that span reads EPS. N-acetyl-D-glucosamine is bound at residue 211-213; sequence INH. Residues Asn-221 and Asp-222 each contribute to the Ca(2+) site.

May interact with PTPN6 via its ITIM site. Expressed by myeloid cells (dendritic cells, macrophages, and neutrophils) and B-cells.

It is found in the cell membrane. C-type lectin receptor that binds carbohydrates mannose and fucose but also weakly interacts with N-acetylglucosamine (GlcNAc) in a Ca(2+)-dependent manner. Involved in regulating immune reactivity. Once triggered by antigen, it is internalized by clathrin-dependent endocytosis and delivers its antigenic cargo into the antigen presentation pathway resulting in cross-priming of CD8(+) T cells. This cross-presentation and cross-priming are enhanced by TLR7 and TLR8 agonists with increased expansion of the CD8(+) T cells, high production of IFNG and TNF with reduced levels of IL4, IL5 and IL13. In plasmacytoid dendritic cells, inhibits TLR9-mediated IFNA and TNF production. May be involved via its ITIM motif (immunoreceptor tyrosine-based inhibitory motifs) in the inhibition of B-cell-receptor-mediated calcium mobilization and protein tyrosine phosphorylation. This chain is C-type lectin domain family 4 member A (Clec4a), found in Rattus norvegicus (Rat).